The following is a 366-amino-acid chain: Carbamoyl phosphate synthase small chain (366 aa).

The segment at 1-171 (MQSKRYLVLE…KTPYVSTGKD (171 aa)) is CPSase. L-glutamine contacts are provided by serine 47, glycine 221, and glycine 223. A Glutamine amidotransferase type-1 domain is found at 173–360 (SVVLVDFGKK…VAMMTNFKEK (188 aa)). Cysteine 248 acts as the Nucleophile in catalysis. L-glutamine contacts are provided by leucine 249, glutamine 252, asparagine 290, glycine 292, and tyrosine 293. Catalysis depends on residues histidine 333 and glutamate 335.

This sequence belongs to the CarA family. Composed of two chains; the small (or glutamine) chain promotes the hydrolysis of glutamine to ammonia, which is used by the large (or ammonia) chain to synthesize carbamoyl phosphate. Tetramer of heterodimers (alpha,beta)4.

It carries out the reaction hydrogencarbonate + L-glutamine + 2 ATP + H2O = carbamoyl phosphate + L-glutamate + 2 ADP + phosphate + 2 H(+). The enzyme catalyses L-glutamine + H2O = L-glutamate + NH4(+). Its pathway is amino-acid biosynthesis; L-arginine biosynthesis; carbamoyl phosphate from bicarbonate: step 1/1. It participates in pyrimidine metabolism; UMP biosynthesis via de novo pathway; (S)-dihydroorotate from bicarbonate: step 1/3. Small subunit of the glutamine-dependent carbamoyl phosphate synthetase (CPSase). CPSase catalyzes the formation of carbamoyl phosphate from the ammonia moiety of glutamine, carbonate, and phosphate donated by ATP, constituting the first step of 2 biosynthetic pathways, one leading to arginine and/or urea and the other to pyrimidine nucleotides. The small subunit (glutamine amidotransferase) binds and cleaves glutamine to supply the large subunit with the substrate ammonia. The chain is Carbamoyl phosphate synthase small chain from Staphylococcus aureus (strain COL).